A 691-amino-acid chain; its full sequence is Elongation factor G (691 aa).

Positions 8 to 282 (EQTRNIGIMA…AVIDYLPAPT (275 aa)) constitute a tr-type G domain. GTP-binding positions include 17-24 (AHIDAGKT), 81-85 (DTPGH), and 135-138 (NKMD).

It belongs to the TRAFAC class translation factor GTPase superfamily. Classic translation factor GTPase family. EF-G/EF-2 subfamily.

It localises to the cytoplasm. Its function is as follows. Catalyzes the GTP-dependent ribosomal translocation step during translation elongation. During this step, the ribosome changes from the pre-translocational (PRE) to the post-translocational (POST) state as the newly formed A-site-bound peptidyl-tRNA and P-site-bound deacylated tRNA move to the P and E sites, respectively. Catalyzes the coordinated movement of the two tRNA molecules, the mRNA and conformational changes in the ribosome. This is Elongation factor G from Natranaerobius thermophilus (strain ATCC BAA-1301 / DSM 18059 / JW/NM-WN-LF).